The following is a 207-amino-acid chain: Protein Nef (207 aa).

Residue Gly-2 is the site of N-myristoyl glycine; by host attachment. Ser-6 bears the Phosphoserine; by host mark. The acidic; interacts with host PACS1 and PACS2; stabilizes the interaction of NEF/MHC-I with host AP1M1; necessary for MHC-I internalization stretch occupies residues 62 to 66; that stretch reads EEEEE. Positions 70–79 are SH3-binding; interaction with Src family tyrosine kinases; sequence PVRPQVPLRP. Positions 73 to 76 match the PxxP; stabilizes the interaction of NEF/MHC-I with host AP1M1; necessary for MHC-I internalization motif; the sequence is PQVP. A mediates dimerization, Nef-PTE1 interaction region spans residues 109–125; it reads EILDLWVYNTQGYFPDW. The segment at 149–181 is binding to ATP6V1H; that stretch reads VDPQDVEKANEGENNSLLHPMCQHGIEDPEREV. A Dileucine internalization motif; necessary for CD4 internalization motif is present at residues 165 to 166; the sequence is LL. The Diacidic; necessary for CD4 internalization signature appears at 175-176; sequence ED.

It belongs to the lentivirus primate group Nef protein family. Monomer; cytosolic form. Homodimer; membrane bound form. Interacts with Nef associated p21-activated kinase (PAK2); this interaction activates PAK2. Associates with the Nef-MHC-I-AP1 complex; this complex is required for MHC-I internalization. Interacts (via C-terminus) with host PI3-kinase. Interacts with host PACS1; this interaction seems to be weak. Interacts with host PACS2. Interacts with host LCK and MAPK3; these interactions inhibit the kinase activity of the latter. Interacts with host ATP6V1H; this interaction may play a role in CD4 endocytosis. Associates with the CD4-Nef-AP2 complex; this complex is required for CD4 internalization. Interacts with host AP2 subunit alpha and AP2 subunit sigma2. Interacts with TCR-zeta chain; this interaction up-regulates the Fas ligand (FasL) surface expression. Interacts with host HCK, LYN, and SRC; these interactions activate the Src family kinases. Interacts with MAP3K5; this interaction inhibits the Fas and TNFR-mediated death signals. Interacts with beta-COP and PTE1. Interacts with human RACK1; this increases Nef phosphorylation by PKC. Interacts with TP53; this interaction decreases the half-life of TP53, protecting the infected cell against p53-mediated apoptosis. Post-translationally, the virion-associated Nef proteins are cleaved by the viral protease to release the soluble C-terminal core protein. Nef is probably cleaved concomitantly with viral structural proteins on maturation of virus particles. Myristoylated. In terms of processing, phosphorylated on serine residues, probably by host PKCdelta and theta.

The protein resides in the host cell membrane. It is found in the virion. The protein localises to the secreted. Its subcellular location is the host Golgi apparatus membrane. Factor of infectivity and pathogenicity, required for optimal virus replication. Alters numerous pathways of T-lymphocyte function and down-regulates immunity surface molecules in order to evade host defense and increase viral infectivity. Alters the functionality of other immunity cells, like dendritic cells, monocytes/macrophages and NK cells. Its function is as follows. In infected CD4(+) T-lymphocytes, down-regulates the surface MHC-I, mature MHC-II, CD4, CD28, CCR5 and CXCR4 molecules. Mediates internalization and degradation of host CD4 through the interaction of with the cytoplasmic tail of CD4, the recruitment of AP-2 (clathrin adapter protein complex 2), internalization through clathrin coated pits, and subsequent transport to endosomes and lysosomes for degradation. Diverts host MHC-I molecules to the trans-Golgi network-associated endosomal compartments by an endocytic pathway to finally target them for degradation. MHC-I down-regulation may involve AP-1 (clathrin adapter protein complex 1) or possibly Src family kinase-ZAP70/Syk-PI3K cascade recruited by PACS2. In consequence infected cells are masked for immune recognition by cytotoxic T-lymphocytes. Decreasing the number of immune receptors also prevents reinfection by more HIV particles (superinfection). Down-regulates host SERINC3 and SERINC5 thereby excluding these proteins from the viral particles. Virion infectivity is drastically higher when SERINC3 or SERINC5 are excluded from the viral envelope, because these host antiviral proteins impair the membrane fusion event necessary for subsequent virion penetration. In terms of biological role, bypasses host T-cell signaling by inducing a transcriptional program nearly identical to that of anti-CD3 cell activation. Interaction with TCR-zeta chain up-regulates the Fas ligand (FasL). Increasing surface FasL molecules and decreasing surface MHC-I molecules on infected CD4(+) cells send attacking cytotoxic CD8+ T-lymphocytes into apoptosis. Functionally, plays a role in optimizing the host cell environment for viral replication without causing cell death by apoptosis. Protects the infected cells from apoptosis in order to keep them alive until the next virus generation is ready to strike. Inhibits the Fas and TNFR-mediated death signals by blocking MAP3K5/ASK1. Decreases the half-life of TP53, protecting the infected cell against p53-mediated apoptosis. Inhibits the apoptotic signals regulated by the Bcl-2 family proteins through the formation of a Nef/PI3-kinase/PAK2 complex that leads to activation of PAK2 and induces phosphorylation of host BAD. Extracellular Nef protein targets CD4(+) T-lymphocytes for apoptosis by interacting with CXCR4 surface receptors. In Homo sapiens (Human), this protein is Protein Nef.